Reading from the N-terminus, the 365-residue chain is Caffeic acid 3-O-methyltransferase (365 aa).

130–136 contacts substrate; that stretch reads MNQDKVL. The tract at residues 162 to 180 is substrate binding; that stretch reads AFDYHGTDPRFNKVFNKGM. Gly-208, Asp-231, Asp-251, Met-252, and Lys-265 together coordinate S-adenosyl-L-methionine. His-269 acts as the Proton acceptor in catalysis.

It belongs to the class I-like SAM-binding methyltransferase superfamily. Cation-independent O-methyltransferase family. COMT subfamily. Homodimer.

The catalysed reaction is (E)-caffeate + S-adenosyl-L-methionine = (E)-ferulate + S-adenosyl-L-homocysteine + H(+). The protein operates within aromatic compound metabolism; phenylpropanoid biosynthesis. Catalyzes the conversion of caffeic acid to ferulic acid and of 5-hydroxyferulic acid to sinapic acid. The resulting products may subsequently be converted to the corresponding alcohols that are incorporated into lignins. The sequence is that of Caffeic acid 3-O-methyltransferase (COMT1) from Rosa chinensis (China rose).